Consider the following 353-residue polypeptide: Melatonin receptor type 1A (353 aa).

The span at 1–15 (MKGNGSTLLNASQQA) shows a compositional bias: polar residues. The interval 1–23 (MKGNGSTLLNASQQAPGVGEGGG) is disordered. Over 1–32 (MKGNGSTLLNASQQAPGVGEGGGPRPSWLAST) the chain is Extracellular. N-linked (GlcNAc...) asparagine glycosylation is found at Asn4 and Asn10. The chain crosses the membrane as a helical span at residues 33 to 53 (LAFILIFTIVVDILGNLLVIL). Residues 54 to 66 (SVYRNKKLRNAGN) lie on the Cytoplasmic side of the membrane. The chain crosses the membrane as a helical span at residues 67-87 (IFVVSLAIADLVVAIYPYPLV). At 88–105 (LTSIFNNGWNLGYLHCQI) the chain is on the extracellular side. An intrachain disulfide couples Cys103 to Cys180. A helical transmembrane segment spans residues 106-126 (SAFLMGLSVIGSIFNITGIAI). Residues 127 to 147 (NRYCYICHSLKYDRLYSNKNS) are Cytoplasmic-facing. Residues 148–168 (LCYVFLIWVLTLVAIMPNLQT) form a helical membrane-spanning segment. The Extracellular portion of the chain corresponds to 169 to 190 (GTLQYDPRIYSCTFTQSVSSAY). The chain crosses the membrane as a helical span at residues 191-211 (TIAVVVFHFIVPMIIVIFCYL). Over 212–243 (RIWILVLQVRRRVKPDSKPRLKPQDFRNFVTM) the chain is Cytoplasmic. Residues 244 to 264 (FVVFVLFAICWAPLNFIGLIV) form a helical membrane-spanning segment. Residues 265–277 (ASDPATMAPRIPE) lie on the Extracellular side of the membrane. A helical membrane pass occupies residues 278-298 (WLFVASYYMAYFNSCLNAIIY). Over 299–353 (GLLNQNFRQEYKRILVSLFTAKMCFVDSSNDPADKIKCKPAPLIANNNLIKVDSV) the chain is Cytoplasmic.

Belongs to the G-protein coupled receptor 1 family. As to expression, at least in the brain, more precisely in the pars tuberalis and the suprachiasmatic nucleus.

It is found in the cell membrane. High affinity receptor for melatonin. Likely to mediate the reproductive and circadian actions of melatonin. The activity of this receptor is mediated by pertussis toxin sensitive G proteins that inhibit adenylate cyclase activity. Possibly involved in sleep induction, by melatonin activation of the potassium channel KCNMA1/BK and the dissociation of G-beta and G-gamma subunits, thereby decreasing synaptic transmission. This Phodopus sungorus (Striped hairy-footed hamster) protein is Melatonin receptor type 1A (MTNR1A).